Reading from the N-terminus, the 565-residue chain is NAD-dependent malic enzyme (565 aa).

Tyr-104 serves as the catalytic Proton donor. Residue Arg-157 participates in NAD(+) binding. Lys-175 (proton acceptor) is an active-site residue. 3 residues coordinate a divalent metal cation: Glu-246, Asp-247, and Asp-270. Residues Asp-270 and Asn-418 each coordinate NAD(+).

The protein belongs to the malic enzymes family. In terms of assembly, homotetramer. Mg(2+) is required as a cofactor. Requires Mn(2+) as cofactor.

The catalysed reaction is (S)-malate + NAD(+) = pyruvate + CO2 + NADH. The enzyme catalyses oxaloacetate + H(+) = pyruvate + CO2. The chain is NAD-dependent malic enzyme from Proteus mirabilis (strain HI4320).